A 275-amino-acid chain; its full sequence is Beta-lactamase OXA-2 (275 aa).

A signal peptide spans 1 to 21 (MAIRIFAILFSIFSLATFAHA). The active-site Acyl-ester intermediate is the serine 72. The residue at position 75 (lysine 75) is an N6-carboxylysine. 210–212 (KTG) provides a ligand contact to substrate.

This sequence belongs to the class-D beta-lactamase family.

The enzyme catalyses a beta-lactam + H2O = a substituted beta-amino acid. This is an oxacillin-hydrolyzing beta-lactamase. In Escherichia coli, this protein is Beta-lactamase OXA-2 (bla).